Consider the following 283-residue polypeptide: Bifunctional protein FolD (283 aa).

Residues 159–161, S184, and I225 contribute to the NADP(+) site; that span reads GRS.

This sequence belongs to the tetrahydrofolate dehydrogenase/cyclohydrolase family. As to quaternary structure, homodimer.

It catalyses the reaction (6R)-5,10-methylene-5,6,7,8-tetrahydrofolate + NADP(+) = (6R)-5,10-methenyltetrahydrofolate + NADPH. The catalysed reaction is (6R)-5,10-methenyltetrahydrofolate + H2O = (6R)-10-formyltetrahydrofolate + H(+). Its pathway is one-carbon metabolism; tetrahydrofolate interconversion. In terms of biological role, catalyzes the oxidation of 5,10-methylenetetrahydrofolate to 5,10-methenyltetrahydrofolate and then the hydrolysis of 5,10-methenyltetrahydrofolate to 10-formyltetrahydrofolate. This is Bifunctional protein FolD from Methanoculleus marisnigri (strain ATCC 35101 / DSM 1498 / JR1).